Consider the following 279-residue polypeptide: Dehydrogenase/reductase SDR family member 4 (279 aa).

Residue 37 to 61 (LVTASTDGIGFAIARRLAQDGAHVV) coordinates NADP(+). Lys-93 carries the post-translational modification N6-acetyllysine; alternate. At Lys-93 the chain carries N6-succinyllysine; alternate. Position 106 is an N6-acetyllysine (Lys-106). Residue Ser-170 participates in substrate binding. Tyr-183 functions as the Proton acceptor in the catalytic mechanism. Lys-187 lines the NADP(+) pocket. Ser-221 is subject to Phosphoserine. Lys-235 is subject to N6-succinyllysine. The Peroxisomal targeting signal motif lies at 277 to 279 (SHL).

The protein belongs to the short-chain dehydrogenases/reductases (SDR) family. In terms of assembly, homotetramer.

The protein resides in the peroxisome. It carries out the reaction a secondary alcohol + NADP(+) = a ketone + NADPH + H(+). The catalysed reaction is 3alpha-hydroxy-5beta-pregnan-20-one + NADP(+) = 5beta-pregnan-3,20-dione + NADPH + H(+). It catalyses the reaction 5beta-dihydrotestosterone + NADPH + H(+) = 5beta-androstane-3alpha,17beta-diol + NADP(+). The enzyme catalyses all-trans-retinol + NADP(+) = all-trans-retinal + NADPH + H(+). It carries out the reaction isatin + NADPH + H(+) = 3-hydroxyindolin-2-one + NADP(+). NADPH-dependent oxidoreductase which catalyzes the reduction of a variety of compounds bearing carbonyl groups including ketosteroids, alpha-dicarbonyl compounds, aldehydes, aromatic ketones and quinones. Reduces all-trans-retinal and 9-cis retinal. Reduces 3-ketosteroids and benzil into 3alpha-hydroxysteroids and S-benzoin, respectively, in contrast to the stereoselectivity of primates DHRS4s which produce 3beta-hydroxysteroids and R-benzoin. In the reverse reaction, catalyzes the NADP-dependent oxidation of 3alpha-hydroxysteroids and alcohol, but with much lower efficiency. Involved in the metabolism of 3alpha-hydroxysteroids, retinoid, isatin and xenobiotic carbonyl compounds. The protein is Dehydrogenase/reductase SDR family member 4 (DHRS4) of Bos taurus (Bovine).